Reading from the N-terminus, the 462-residue chain is Cysteine--tRNA ligase (462 aa).

Cys-27 is a Zn(2+) binding site. The 'HIGH' region signature appears at 29-39; sequence PTVYDLAHIGN. Residues Cys-211, His-236, and Glu-240 each contribute to the Zn(2+) site. The short motif at 270 to 274 is the 'KMSKS' region element; sequence KMSKS. ATP is bound at residue Lys-273.

Belongs to the class-I aminoacyl-tRNA synthetase family. As to quaternary structure, monomer. Zn(2+) is required as a cofactor.

The protein resides in the cytoplasm. It catalyses the reaction tRNA(Cys) + L-cysteine + ATP = L-cysteinyl-tRNA(Cys) + AMP + diphosphate. The protein is Cysteine--tRNA ligase of Anaplasma phagocytophilum (strain HZ).